Reading from the N-terminus, the 149-residue chain is Large ribosomal subunit protein bL9 (149 aa).

Belongs to the bacterial ribosomal protein bL9 family.

Its function is as follows. Binds to the 23S rRNA. In Glaesserella parasuis serovar 5 (strain SH0165) (Haemophilus parasuis), this protein is Large ribosomal subunit protein bL9.